Consider the following 274-residue polypeptide: MFRQVYNLLEYLKFFLYGLIQGFTEFIPVSSTAHLKVISLFLGIDDPGASLSATIQLGSVLAIAWYFKNDIFNFRSQSSKKLIAYLLHKRLLRSILIGTIPIVLLGGSIKLFVPYFFDNVLRSNLSIALVSFLMAFFMYLADSSRRGSINIKNHNYSNSFLIGFFQAFAIFPGVSRSGITISSALISGWERGDAAKFSFLLGIPAISLAAIVEFISSFNDFFALGFFPLFVGLITTFVSSLLAIDFLLKYFSSNGLKIFIIYRVIFGIVILLNL.

A run of 8 helical transmembrane segments spans residues 9–29 (LEYL…FIPV), 47–67 (PGAS…AWYF), 95–115 (ILIG…FVPY), 120–140 (VLRS…FMYL), 161–181 (LIGF…GITI), 197–217 (FSFL…FISS), 224–244 (LGFF…LLAI), and 254–274 (NGLK…LLNL).

Belongs to the UppP family.

The protein resides in the cell inner membrane. It carries out the reaction di-trans,octa-cis-undecaprenyl diphosphate + H2O = di-trans,octa-cis-undecaprenyl phosphate + phosphate + H(+). Its function is as follows. Catalyzes the dephosphorylation of undecaprenyl diphosphate (UPP). Confers resistance to bacitracin. The polypeptide is Undecaprenyl-diphosphatase (Prochlorococcus marinus (strain AS9601)).